A 120-amino-acid polypeptide reads, in one-letter code: Ribonuclease P protein component (120 aa).

Belongs to the RnpA family. In terms of assembly, consists of a catalytic RNA component (M1 or rnpB) and a protein subunit.

It carries out the reaction Endonucleolytic cleavage of RNA, removing 5'-extranucleotides from tRNA precursor.. RNaseP catalyzes the removal of the 5'-leader sequence from pre-tRNA to produce the mature 5'-terminus. It can also cleave other RNA substrates such as 4.5S RNA. The protein component plays an auxiliary but essential role in vivo by binding to the 5'-leader sequence and broadening the substrate specificity of the ribozyme. This is Ribonuclease P protein component from Chelativorans sp. (strain BNC1).